The chain runs to 269 residues: [LysW]-aminoadipate kinase (269 aa).

Position 5-8 (5-8) interacts with ATP; it reads KVGG. Arg64 lines the substrate pocket. Tyr78 is an ATP binding site. Asn168 serves as a coordination point for substrate.

Belongs to the acetylglutamate kinase family. LysZ subfamily.

It localises to the cytoplasm. The catalysed reaction is [amino-group carrier protein]-C-terminal-N-(1,4-dicarboxybutan-1-yl)-L-glutamine + ATP = [amino-group carrier protein]-C-terminal-N-(1-carboxy-5-phosphooxy-5-oxopentan-1-yl)-L-glutamine + ADP. It functions in the pathway amino-acid biosynthesis; L-lysine biosynthesis via AAA pathway; L-lysine from L-alpha-aminoadipate (Thermus route): step 2/5. In terms of biological role, catalyzes the phosphorylation of LysW-gamma-alpha-aminoadipate. Does not phosphorylate N-acetyl-glutamate. The protein is [LysW]-aminoadipate kinase of Thermus thermophilus (strain ATCC BAA-163 / DSM 7039 / HB27).